Reading from the N-terminus, the 974-residue chain is Valine--tRNA ligase, chloroplastic/mitochondrial 2 (974 aa).

Residues P109–H119 carry the 'HIGH' region motif. One copy of the LRR 1 repeat lies at L432 to K454. The stretch at E489–D518 forms a coiled coil. The 'KMSKS' region signature appears at K598–S602. K601 contacts ATP. An LRR 2 repeat occupies L857–L880.

It belongs to the class-I aminoacyl-tRNA synthetase family.

It is found in the plastid. The protein resides in the chloroplast. It localises to the mitochondrion. The enzyme catalyses tRNA(Val) + L-valine + ATP = L-valyl-tRNA(Val) + AMP + diphosphate. This is Valine--tRNA ligase, chloroplastic/mitochondrial 2 from Arabidopsis thaliana (Mouse-ear cress).